A 44-amino-acid polypeptide reads, in one-letter code: Photosystem I reaction center subunit IX (44 aa).

Residues 7 to 27 (YLSVAPVLATLWFGSLAGLLI) form a helical membrane-spanning segment.

The protein belongs to the PsaJ family.

It localises to the plastid. It is found in the chloroplast thylakoid membrane. Functionally, may help in the organization of the PsaE and PsaF subunits. In Illicium oligandrum (Star anise), this protein is Photosystem I reaction center subunit IX.